A 121-amino-acid polypeptide reads, in one-letter code: Large ribosomal subunit protein bL12 (121 aa).

It belongs to the bacterial ribosomal protein bL12 family. In terms of assembly, homodimer. Part of the ribosomal stalk of the 50S ribosomal subunit. Forms a multimeric L10(L12)X complex, where L10 forms an elongated spine to which 2 to 4 L12 dimers bind in a sequential fashion. Binds GTP-bound translation factors.

Its function is as follows. Forms part of the ribosomal stalk which helps the ribosome interact with GTP-bound translation factors. Is thus essential for accurate translation. The protein is Large ribosomal subunit protein bL12 of Pseudomonas fluorescens (strain SBW25).